The chain runs to 165 residues: MTTRKESELEGVTLLGNQGTNYLFEYAPDVLESFPNKHVNRDYFVKFNCPEFTSLCPKTGQPDFATIYISYIPDEKMVESKSLKLYLFSFRNHGDFHEDCMNIIMNDLIELMDPRYIEVWGKFTPRGGISIDPYTNYGKPGTKYEKMAEYRMMNHDLYPETIDNR.

Residue Cys-56 is the Thioimide intermediate of the active site. The active-site Proton donor is the Asp-63. Residues 78-80 (VES) and 97-98 (HE) contribute to the substrate site. Mg(2+) contacts are provided by Asp-163 and Arg-165.

The protein belongs to the GTP cyclohydrolase I family. QueF type 1 subfamily. In terms of assembly, forms an asymmetric tunnel-fold homodecamer of two head-to-head facing pentamers, harboring 10 active sites at the intersubunit interfaces. Does not require a metal cofactor. serves as cofactor.

Its subcellular location is the cytoplasm. It catalyses the reaction 7-aminomethyl-7-carbaguanine + 2 NADP(+) = 7-cyano-7-deazaguanine + 2 NADPH + 3 H(+). Its pathway is tRNA modification; tRNA-queuosine biosynthesis. Its activity is regulated as follows. Activity is strongly inhibited by Cu(2+) and Fe(3+). Catalyzes the NADPH-dependent reduction of 7-cyano-7-deazaguanine (preQ0) to 7-aminomethyl-7-deazaguanine (preQ1), a late step in the queuosine pathway. This Bacillus subtilis (strain 168) protein is NADPH-dependent 7-cyano-7-deazaguanine reductase (queF).